The chain runs to 538 residues: MFRRNLITSAILLMAPLAFSAQSLAESLTVEQRLELLEKALRETQSELKKYKDEEKKKYTPATVNRSVSTNDQGYAANPFPTSSAAKPDAVLVKNEEKNASETGSIYSSMTLKDFSKFVKDEIGFSYNGYYRSGWGTASHGSPKSWAIGSLGRFGNEYSGWFDLQLKQRVYNENGKRVDAVVMMDGNVGQQYSTGWFGDNAGGENFMQFSDMYVTTKGFLPFAPEADFWVGKHGAPKIEIQMLDWKTQRTDAAAGVGLENWKVGPGKIDIALVREDVDDYDRSLQNKQQINTNTIDLRYKDIPLWDKATLMVSGRYVTANESASEKDNQDNNGYYDWKDTWMFGTSLTQKFDKGGFNEFSFLVANNSIASNFGRYAGASPFTTFNGRYYGDHTGGTAVRLTSQGEAYIGDHFIVANAIVYSFGNDIYSYETGAHSDFESIRAVVRPAYIWDQYNQTGVELGYFTQQNKDANSNKFNESGYKTTLFHTFKVNTSMLTSRPEIRFYATYIKALENELDGFTFEDNKDDQFAVGAQAEIWW.

A signal peptide spans 1-25 (MFRRNLITSAILLMAPLAFSAQSLA). A disordered region spans residues 52-82 (KDEEKKKYTPATVNRSVSTNDQGYAANPFPT). Positions 62 to 73 (ATVNRSVSTNDQ) are enriched in polar residues.

Belongs to the porin LamB (TC 1.B.3) family.

Its subcellular location is the cell outer membrane. Its function is as follows. May be a sugar porin with a broad carbohydrate specificity. The protein is Putative outer membrane porin BglH (bglH) of Shigella sonnei (strain Ss046).